The following is a 366-amino-acid chain: MNKVVLLCRPGFEKECAAEITDKAGQREIFGFARVKENAGYVIYECYQPDDGDKLIRELPFSSLIFARQWFVVGELLQHLPPEDRITPIVGMLQGVVEKGGELRVEVADTNESKELLKFCRKFTVPLRAALRDAGVLANYETPKRPVVHVFFIAPGCCYTGYSYSSNNSPFYMGIPRLKFPADAPSRSTLKLEEAFHVFIPADEWDERLANGMWAVDLGACPGGWTYQLVKRNMWVYSVDNGPMAQSLMDTGQVTWLREDGFKFRPTCSNISWMVCDMVEKPAKVAALMAQWLVNGWCRETIFNLKLPMKKRYEEVSHNLAYIQAQLDEHGINAQIQARQLYHDREEVTVHVRRIWAAVGGRRDER.

Residues Ser-188, 221 to 224 (CPGG), Asp-240, Asp-260, and Asp-277 each bind S-adenosyl-L-methionine. The active-site Proton acceptor is the Lys-306.

Belongs to the class I-like SAM-binding methyltransferase superfamily. RNA methyltransferase RlmE family. RlmM subfamily. In terms of assembly, monomer.

The protein localises to the cytoplasm. It carries out the reaction cytidine(2498) in 23S rRNA + S-adenosyl-L-methionine = 2'-O-methylcytidine(2498) in 23S rRNA + S-adenosyl-L-homocysteine + H(+). Catalyzes the 2'-O-methylation at nucleotide C2498 in 23S rRNA. In Escherichia coli O45:K1 (strain S88 / ExPEC), this protein is Ribosomal RNA large subunit methyltransferase M.